The sequence spans 302 residues: Pseudouridine-5'-phosphate glycosidase (302 aa).

The active-site Proton donor is the E25. Residues K86 and V106 each coordinate substrate. Residue D138 participates in Mn(2+) binding. 140–142 (SAD) contacts substrate. Catalysis depends on K159, which acts as the Nucleophile.

Belongs to the pseudouridine-5'-phosphate glycosidase family. Homotrimer. Mn(2+) serves as cofactor.

It catalyses the reaction D-ribose 5-phosphate + uracil = psi-UMP + H2O. Functionally, catalyzes the reversible cleavage of pseudouridine 5'-phosphate (PsiMP) to ribose 5-phosphate and uracil. Functions biologically in the cleavage direction, as part of a pseudouridine degradation pathway. The sequence is that of Pseudouridine-5'-phosphate glycosidase from Jannaschia sp. (strain CCS1).